The sequence spans 655 residues: MVLYTTPFPNSCLSALHCVSWALIFPCYWLVDRLAASFIPTTYEKRQRADDPCCLQLLCTALFTPIYLALLVASLPFAFLGFLFWSPLQSARRPYIYSRLEDKGLAGGAALLSEWKGTGPGKSFCFATANVCLLPDSLARVNNLFNTQARAKEIGQRIRNGAARPQIKIYIDSPTNTSISAASFSSLVSPQGGDGVARAVPGSIKRTASVEYKGDGGRHPGDEAANGPASGDPVDSSSPEDACIVRIGGEEGGRPPEADDPVPGGQARNGAGGGPRGQTPNHNQQDGDSGSLGSPSASRESLVKGRAGPDTSASGEPGANSKLLYKASVVKKAAARRRRHPDEAFDHEVSAFFPANLDFLCLQEVFDKRAATKLKEQLHGYFEYILYDVGVYGCQGCCSFKCLNSGLLFASRYPIMDVAYHCYPNKCNDDALASKGALFLKVQVGSTPQDQRIVGYIACTHLHAPQEDSAIRCGQLDLLQDWLADFRKSTSSSSAANPEELVAFDVVCGDFNFDNCSSDDKLEQQHSLFTHYRDPCRLGPGEEKPWAIGTLLDTNGLYDEDVCTPDNLQKVLESEEGRREYLAFPTSKSSGQKGRKELLKGNGRRIDYMLHAEEGLCPDWKAEVEEFSFITQLSGLTDHLPVAMRLMVSSGEEEA.

The Cytoplasmic segment spans residues 1-10; the sequence is MVLYTTPFPN. The segment at residues 11–31 is an intramembrane region (helical); it reads SCLSALHCVSWALIFPCYWLV. At 32-64 the chain is on the cytoplasmic side; that stretch reads DRLAASFIPTTYEKRQRADDPCCLQLLCTALFT. 3 S-palmitoyl cysteine lipidation sites follow: cysteine 53, cysteine 54, and cysteine 59. Residues 65 to 85 constitute an intramembrane region (helical); that stretch reads PIYLALLVASLPFAFLGFLFW. Topologically, residues 86–655 are cytoplasmic; it reads SPLQSARRPY…LMVSSGEEEA (570 aa). Serine 178 bears the Phosphoserine mark. A disordered region spans residues 210–319; that stretch reads VEYKGDGGRH…DTSASGEPGA (110 aa). Basic and acidic residues-rich tracts occupy residues 212 to 222 and 248 to 257; these read YKGDGGRHPGD and GGEEGGRPPE. A compositionally biased stretch (polar residues) spans 279 to 299; that stretch reads TPNHNQQDGDSGSLGSPSASR. Serine 291 is subject to Phosphoserine. Glutamate 364 contributes to the Mg(2+) binding site. S-palmitoyl cysteine attachment occurs at residues cysteine 397 and cysteine 398. Histidine 639 acts as the Proton acceptor in catalysis.

Belongs to the neutral sphingomyelinase family. The cofactor is Mg(2+). In terms of processing, palmitoylated, palmitoylation-deficient proteins are targeted for lysosomal degradation. As to expression, predominantly expressed in brain.

It is found in the golgi apparatus membrane. It localises to the cell membrane. It carries out the reaction a sphingomyelin + H2O = phosphocholine + an N-acylsphing-4-enine + H(+). The enzyme catalyses N-(15Z-tetracosenoyl)sphing-4-enine-1-phosphocholine + H2O = N-(15Z-tetracosenoyl)-sphing-4-enine + phosphocholine + H(+). It catalyses the reaction N-(tetracosanoyl)-sphing-4-enine-1-phosphocholine + H2O = N-tetracosanoyl-sphing-4-enine + phosphocholine + H(+). The catalysed reaction is an N-(acyl)-sphingosylphosphocholine + H2O = an N-acyl-sphingoid base + phosphocholine + H(+). It carries out the reaction 1-hexadecanoyl-sn-glycero-3-phosphocholine + H2O = 1-hexadecanoyl-sn-glycerol + phosphocholine + H(+). The enzyme catalyses 1-O-octadecyl-sn-glycero-3-phosphocholine + H2O = 1-O-octadecyl-sn-glycerol + phosphocholine + H(+). It catalyses the reaction a sphingosylphosphocholine + H2O = a sphingoid base + phosphocholine + H(+). The catalysed reaction is N-(hexadecanoyl)-sphing-4-enine-1-phosphocholine + H2O = N-hexadecanoylsphing-4-enine + phosphocholine + H(+). It participates in lipid metabolism; sphingolipid metabolism. Its activity is regulated as follows. Inhibited by nSMase inhibitor GW4869. Binding of anionic phospholipids (APLs) such as phosphatidylserine (PS) and phosphatidic acid (PA) increases enzymatic activity. Catalyzes the hydrolysis of sphingomyelin to form ceramide and phosphocholine. Ceramide mediates numerous cellular functions, such as apoptosis and growth arrest, and is capable of regulating these 2 cellular events independently. Also hydrolyzes sphingosylphosphocholine. Regulates the cell cycle by acting as a growth suppressor in confluent cells. Probably acts as a regulator of postnatal development and participates in bone and dentin mineralization. Binds to anionic phospholipids (APLs) such as phosphatidylserine (PS) and phosphatidic acid (PA) that modulate enzymatic activity and subcellular location. May be involved in IL-1-beta-induced JNK activation in hepatocytes. May act as a mediator in transcriptional regulation of NOS2/iNOS via the NF-kappa-B activation under inflammatory conditions. The sequence is that of Sphingomyelin phosphodiesterase 3 from Homo sapiens (Human).